We begin with the raw amino-acid sequence, 3564 residues long: CUB and sushi domain-containing protein 1 (3564 aa).

The N-terminal stretch at 1 to 29 (MTAWRKFKSLLLPLVLAVLCAGLLTAAKG) is a signal peptide. At 30 to 3487 (QNCGGLVQGP…NHYQGTSSGS (3458 aa)) the chain is on the extracellular side. Intrachain disulfides connect cysteine 32–cysteine 58, cysteine 145–cysteine 185, cysteine 171–cysteine 202, cysteine 208–cysteine 234, cysteine 349–cysteine 389, cysteine 375–cysteine 406, cysteine 411–cysteine 437, cysteine 527–cysteine 567, cysteine 553–cysteine 580, and cysteine 584–cysteine 610. Positions 32-140 (CGGLVQGPNG…QGFKAMYEVL (109 aa)) constitute a CUB 1 domain. 2 N-linked (GlcNAc...) asparagine glycosylation sites follow: asparagine 40 and asparagine 57. In terms of domain architecture, Sushi 1 spans 143–204 (HTCGNPGEIL…WDFPAPFCRA (62 aa)). A CUB 2 domain is found at 208 to 312 (CGGTLRGTSG…KGFNAQFQVK (105 aa)). The Sushi 2 domain occupies 347–408 (DMCPDPGIPD…WNDHRPICRA (62 aa)). In terms of domain architecture, CUB 3 spans 411–522 (CGSNLRGPSG…PGFKAVYQEI (112 aa)). Residues 525-582 (GGCGDPGIPAYGKRTGSSFLHGDTLTFECQAAFELVGERVITCQKNNQWSGNKPSCVF) enclose the Sushi 3 domain. Positions 584 to 692 (CFFNFTAPSG…RGFNITYTTF (109 aa)) constitute a CUB 4 domain. 2 N-linked (GlcNAc...) asparagine glycosylation sites follow: asparagine 587 and asparagine 686. The Sushi 4 domain maps to 695-756 (NECHDPGIPV…WSSTVPRCEA (62 aa)). 6 cysteine pairs are disulfide-bonded: cysteine 697/cysteine 738, cysteine 723/cysteine 754, cysteine 758/cysteine 784, cysteine 873/cysteine 913, cysteine 899/cysteine 926, and cysteine 930/cysteine 956. One can recognise a CUB 5 domain in the interval 758 to 866 (CGGHLTASSG…VGFLIHYESV (109 aa)). Residues 871–928 (DSCLDPGIPVNGQRHGSNFGIRSTVTFSCDPGYTLSDDEPLVCEKNHQWNHALPSCDA) form the Sushi 5 domain. The CUB 6 domain maps to 930-1040 (CGGYIHGKSG…EGFNITFAEY (111 aa)). Residues asparagine 955, asparagine 1015, and asparagine 1034 are each glycosylated (N-linked (GlcNAc...) asparagine). The region spanning 1043–1102 (EPCDDPGVPAFSRRIGFQFGVGDTLAFTCFQGYRLEGATKLTCLGGGRRVWSAPLPRCVA) is the Sushi 6 domain. 3 disulfide bridges follow: cysteine 1045/cysteine 1085, cysteine 1071/cysteine 1100, and cysteine 1104/cysteine 1130. Positions 1104 to 1212 (CGASVKGNEG…QGFQLTYTSF (109 aa)) constitute a CUB 7 domain. N-linked (GlcNAc...) asparagine glycosylation is found at asparagine 1184 and asparagine 1197. A Sushi 7 domain is found at 1215–1275 (VKCEDPGIPN…WDKPMPSCVA (61 aa)). 12 disulfide bridges follow: cysteine 1217–cysteine 1258, cysteine 1244–cysteine 1273, cysteine 1277–cysteine 1304, cysteine 1391–cysteine 1431, cysteine 1417–cysteine 1447, cysteine 1451–cysteine 1477, cysteine 1564–cysteine 1604, cysteine 1590–cysteine 1621, cysteine 1625–cysteine 1651, cysteine 1741–cysteine 1781, cysteine 1767–cysteine 1798, and cysteine 1802–cysteine 1828. The CUB 8 domain occupies 1277 to 1386 (CGGLVHAATS…SGFSIQFSTS (110 aa)). The Sushi 8 domain maps to 1389 to 1449 (STCNDPGMPQ…WQPDPPSCIA (61 aa)). N-linked (GlcNAc...) asparagine glycosylation is present at asparagine 1399. A CUB 9 domain is found at 1451 to 1559 (CGGNLTGPAG…SGFAIEFKEK (109 aa)). 2 N-linked (GlcNAc...) asparagine glycosylation sites follow: asparagine 1454 and asparagine 1572. Residues 1562–1623 (EACFDPGNIM…WDRALPACQA (62 aa)) form the Sushi 9 domain. The 109-residue stretch at 1625 to 1733 (CGGQYTGSEG…RGFHFVYQAV (109 aa)) folds into the CUB 10 domain. A glycan (N-linked (GlcNAc...) asparagine) is linked at asparagine 1644. The Sushi 10 domain maps to 1739–1800 (TQCSSVPEPR…WNDTIPSCVV (62 aa)). N-linked (GlcNAc...) asparagine glycosylation is found at asparagine 1792, asparagine 1805, and asparagine 1882. The region spanning 1802–1910 (CSGNFTQRRG…AGFHLEYKTV (109 aa)) is the CUB 11 domain. The Sushi 11 domain occupies 1913-1972 (AACQEPALPSNGIKIGDRYMVNDVLSFQCEPGYTLQGRSHISCMPGTVRRWNYPSPLCIA). 3 disulfide bridges follow: cysteine 1915/cysteine 1955, cysteine 1941/cysteine 1970, and cysteine 1974/cysteine 2000. The 109-residue stretch at 1974–2082 (CGGTLTSMSG…QGFKLSYQAY (109 aa)) folds into the CUB 12 domain. Asparagine 2018 carries an N-linked (GlcNAc...) asparagine glycan. In terms of domain architecture, Sushi 12 spans 2085–2144 (QNCPDPPAFQNGFMINSDYSVGQSISFECYPGYILLGHPVLTCQHGTDRNWNYPFPRCDA). 3 disulfides stabilise this stretch: cysteine 2087–cysteine 2127, cysteine 2113–cysteine 2142, and cysteine 2146–cysteine 2172. The CUB 13 domain maps to 2146–2257 (CGYNVTSQNG…LNFHAFQLKR (112 aa)). Residues asparagine 2149, asparagine 2154, and asparagine 2187 are each glycosylated (N-linked (GlcNAc...) asparagine). The Sushi 13 domain maps to 2256 to 2317 (KRCPPPPAVP…FQGSPPTCEA (62 aa)). Disulfide bonds link cysteine 2258–cysteine 2300, cysteine 2286–cysteine 2315, and cysteine 2319–cysteine 2347. The CUB 14 domain maps to 2319–2430 (CPANEVRTES…KGFKIRYAAP (112 aa)). Residues asparagine 2358, asparagine 2394, asparagine 2400, asparagine 2445, asparagine 2470, and asparagine 2503 are each glycosylated (N-linked (GlcNAc...) asparagine). 15 Sushi domains span residues 2430-2492 (PYCS…LCQA), 2493-2554 (VSCG…TCKP), 2555-2619 (VPCP…RCKV), 2620-2677 (ISCG…RCLA), 2678-2735 (GHCG…VCVP), 2736-2793 (ITCG…ICRV), 2794-2856 (VNCS…KCLA), 2857-2914 (ISCG…HCSG), 2918-2975 (GFCG…VCEA), 2976-3034 (VSCG…DCTI), 3035-3094 (ISCG…LCKA), 3095-3152 (VLCN…QCLP), 3153-3210 (VFCG…TCID), 3214-3272 (TACP…ECIP), and 3273-3332 (HACR…VCKS). Cystine bridges form between cysteine 2432–cysteine 2473, cysteine 2459–cysteine 2490, cysteine 2495–cysteine 2537, cysteine 2521–cysteine 2552, cysteine 2557–cysteine 2602, cysteine 2588–cysteine 2617, cysteine 2622–cysteine 2662, cysteine 2648–cysteine 2675, cysteine 2680–cysteine 2720, cysteine 2706–cysteine 2733, cysteine 2738–cysteine 2778, and cysteine 2764–cysteine 2791. The N-linked (GlcNAc...) asparagine glycan is linked to asparagine 2605. N-linked (GlcNAc...) asparagine glycans are attached at residues asparagine 2750 and asparagine 2761. Asparagine 2795 carries an N-linked (GlcNAc...) asparagine glycan. Cystine bridges form between cysteine 2796–cysteine 2841, cysteine 2827–cysteine 2854, cysteine 2859–cysteine 2899, cysteine 2885–cysteine 2912, cysteine 2920–cysteine 2960, cysteine 2946–cysteine 2973, cysteine 2978–cysteine 3019, cysteine 3005–cysteine 3032, cysteine 3037–cysteine 3079, cysteine 3063–cysteine 3092, cysteine 3097–cysteine 3137, cysteine 3123–cysteine 3150, cysteine 3155–cysteine 3195, cysteine 3181–cysteine 3208, cysteine 3216–cysteine 3257, cysteine 3243–cysteine 3270, cysteine 3275–cysteine 3317, and cysteine 3302–cysteine 3330. The N-linked (GlcNAc...) asparagine glycan is linked to asparagine 2894. The N-linked (GlcNAc...) asparagine glycan is linked to asparagine 2963. Residues asparagine 3022, asparagine 3056, and asparagine 3086 are each glycosylated (N-linked (GlcNAc...) asparagine). N-linked (GlcNAc...) asparagine glycans are attached at residues asparagine 3228 and asparagine 3260. N-linked (GlcNAc...) asparagine glycans are attached at residues asparagine 3339, asparagine 3379, and asparagine 3386. The chain crosses the membrane as a helical span at residues 3488–3508 (VAAAILVPFFALILSGFAFYL). The Cytoplasmic portion of the chain corresponds to 3509 to 3564 (YKHRTRPKVQYNGYAGHENSNGQASFENPMYDTNLKPTEAKAVRFDTTLNTVCTVV).

The protein belongs to the CSMD family.

Its subcellular location is the membrane. In Mus musculus (Mouse), this protein is CUB and sushi domain-containing protein 1 (Csmd1).